We begin with the raw amino-acid sequence, 152 residues long: NADH-quinone oxidoreductase subunit A 2 (152 aa).

3 helical membrane passes run F8–S28, F63–W83, and L90–V110.

Belongs to the complex I subunit 3 family. In terms of assembly, NDH-1 is composed of 14 different subunits. Subunits NuoA, H, J, K, L, M, N constitute the membrane sector of the complex.

The protein resides in the cell inner membrane. It carries out the reaction a quinone + NADH + 5 H(+)(in) = a quinol + NAD(+) + 4 H(+)(out). Its function is as follows. NDH-1 shuttles electrons from NADH, via FMN and iron-sulfur (Fe-S) centers, to quinones in the respiratory chain. The immediate electron acceptor for the enzyme in this species is believed to be a menaquinone. Couples the redox reaction to proton translocation (for every two electrons transferred, four hydrogen ions are translocated across the cytoplasmic membrane), and thus conserves the redox energy in a proton gradient. This Chloroherpeton thalassium (strain ATCC 35110 / GB-78) protein is NADH-quinone oxidoreductase subunit A 2.